The sequence spans 482 residues: Cytochrome c-552 (482 aa).

The first 26 residues, 1–26, serve as a signal peptide directing secretion; sequence MIKVSNALQRILIGAALALFGGGAQA. His-98 contacts heme c. Cys-126, Cys-129, and Lys-130 together coordinate heme. Heme c contacts are provided by Cys-164, Cys-167, His-168, Cys-213, Cys-216, and His-217. Ca(2+)-binding residues include Glu-219, Tyr-220, Lys-265, and Gln-267. A substrate-binding site is contributed by Tyr-220. Residue His-268 participates in substrate binding. Heme c-binding residues include His-279, Cys-286, Cys-289, His-290, His-305, Cys-318, Cys-321, His-322, and His-397.

The protein belongs to the cytochrome c-552 family. Ca(2+) serves as cofactor. Requires heme c as cofactor.

The protein localises to the periplasm. It catalyses the reaction 6 Fe(III)-[cytochrome c] + NH4(+) + 2 H2O = 6 Fe(II)-[cytochrome c] + nitrite + 8 H(+). It functions in the pathway nitrogen metabolism; nitrate reduction (assimilation). Functionally, catalyzes the reduction of nitrite to ammonia, consuming six electrons in the process. In Edwardsiella ictaluri (strain 93-146), this protein is Cytochrome c-552.